A 54-amino-acid polypeptide reads, in one-letter code: Salt stress-induced hydrophobic peptide ESI3 (54 aa).

2 consecutive transmembrane segments (helical) span residues 2 to 22 and 34 to 54; these read GSAT…GVFL and LLLT…VLVV.

The protein belongs to the UPF0057 (PMP3) family.

Its subcellular location is the membrane. The sequence is that of Salt stress-induced hydrophobic peptide ESI3 (ESI3) from Thinopyrum elongatum (Tall wheatgrass).